Reading from the N-terminus, the 89-residue chain is Small ribosomal subunit protein uS17 (89 aa).

The protein belongs to the universal ribosomal protein uS17 family. Part of the 30S ribosomal subunit.

In terms of biological role, one of the primary rRNA binding proteins, it binds specifically to the 5'-end of 16S ribosomal RNA. This chain is Small ribosomal subunit protein uS17, found in Polaromonas sp. (strain JS666 / ATCC BAA-500).